The chain runs to 2551 residues: Piezo-type mechanosensitive ion channel component (2551 aa).

The next 8 helical transmembrane spans lie at 5 to 25, 27 to 47, 56 to 76, 106 to 126, 204 to 226, 231 to 250, 256 to 276, and 320 to 340; these read YACM…AALM, PVGI…VPLA, VTAF…GHIT, FIDL…LVFA, IHFE…FAAV, VPGG…WATC, GFAL…LSIV, and LSLD…ALAL. The disordered stretch occupies residues 354–375; that stretch reads STRKARTPQPLESGSSVAPSVT. Polar residues predominate over residues 363 to 375; sequence PLESGSSVAPSVT. 9 helical membrane-spanning segments follow: residues 395-415, 424-444, 463-483, 516-536, 548-568, 588-608, 611-631, 639-659, and 695-715; these read TTTS…GFIY, ILMM…LLLS, PFIV…GMDL, VPLI…RQFF, LADF…SYLI, LLVR…AITG, MTGF…VFQS, IMYG…ILIY, and FLHL…VHYF. The span at 731–741 shows a compositional bias: polar residues; sequence GSAQQKPTETT. The segment at 731–772 is disordered; that stretch reads GSAQQKPTETTALEPAPSKRRGSAGSLRKSQGPSAEAAPGAT. 12 helical membrane passes run 819–839, 857–877, 910–930, 973–993, 994–1014, 1022–1042, 1071–1091, 1152–1172, 1174–1194, 1198–1218, 1239–1259, and 1275–1295; these read IAAF…FVGF, LISF…IEYL, LMSL…HAVI, LNFG…VSTI, TYRQ…LLLL, IWGV…IVLV, GALH…LVIL, VLCG…TNIA, LLAL…SDFY, IHTI…NILI, WLVH…QIML, and ITHQ…IFQL. Disordered regions lie at residues 1426-1521 and 1592-1658; these read NITE…AKDS and ESDE…PQQQ. Basic and acidic residues predominate over residues 1430–1448; the sequence is SEMKMQRRKTLYDKSKDAP. Residues 1466–1477 show a composition bias toward low complexity; it reads ATASSSASPAPT. Residues 1497–1511 show a composition bias toward basic and acidic residues; sequence QTSKETSDSKSKMEV. Composition is skewed to low complexity over residues 1621 to 1634 and 1644 to 1658; these read PTST…TTTP and LQPL…PQQQ. The next 4 helical transmembrane spans lie at 1718 to 1738, 1741 to 1761, 1770 to 1790, and 1817 to 1837; these read ISSW…VVFI, VVNA…WGTL, FWVT…IFQF, and AHYA…RYLL. The tract at residues 1854 to 1876 is disordered; the sequence is FTKPTASIDERDDSDNLSQPDSR. 7 helical membrane-spanning segments follow: residues 1937–1957, 1979–1999, 2008–2028, 2033–2053, 2075–2095, 2151–2171, and 2431–2451; these read ALMF…FTAF, IPFL…RALY, IIFH…VVPA, TFNS…YMLL, FSMV…LYEL, IMGG…LCLF, and TFSF…VLLA. Residues 2522-2551 are disordered; it reads EYVDDDGDTDSIPSRMSVRRPEQLQPQQPQ.

The protein belongs to the PIEZO (TC 1.A.75) family.

It is found in the cell membrane. Functionally, component of a mechanosensitive channel required for rapidly adapting mechanically activated (MA) currents. Plays a major role in nociception (response to strong or painful touch). Required for maintaining the mechanosensitivity of tarsal bristle mechanosensors. During their evalulation of potential egg-laying sites, females determine the softest substrate for their eggs first by making a coarse evaluation of substrate hardness using mechanosensitive channels nan and Piezo in the leg tarsal bristles, followed by a much finer assessment using nan, iav and Tmc mechanosensitive channels on the labellum. Acts in the nompC- and nan-expressing neurons of the female leg tarsals, to sense the mild differences in egg-laying substrate stiffness. This is Piezo-type mechanosensitive ion channel component from Drosophila melanogaster (Fruit fly).